The sequence spans 24 residues: Brevinin-1CSa (24 aa).

An intrachain disulfide couples Cys-18 to Cys-24.

As to expression, expressed by the skin glands.

It is found in the secreted. The protein resides in the target cell membrane. Functionally, antibacterial peptide. Has activity against the Gram-positive bacterium S.aureus (MIC=2 uM) and the Gram-negative bacterium E.coli (MIC=32 uM). Has a strong hemolytic activity (LC(50)=5 uM). This Rana cascadae (Cascades frog) protein is Brevinin-1CSa.